The primary structure comprises 153 residues: NAD(P)H-quinone oxidoreductase subunit N (153 aa).

This sequence belongs to the complex I NdhN subunit family. As to quaternary structure, NDH-1 can be composed of about 15 different subunits; different subcomplexes with different compositions have been identified which probably have different functions.

It is found in the cellular thylakoid membrane. It catalyses the reaction a plastoquinone + NADH + (n+1) H(+)(in) = a plastoquinol + NAD(+) + n H(+)(out). It carries out the reaction a plastoquinone + NADPH + (n+1) H(+)(in) = a plastoquinol + NADP(+) + n H(+)(out). Its function is as follows. NDH-1 shuttles electrons from an unknown electron donor, via FMN and iron-sulfur (Fe-S) centers, to quinones in the respiratory and/or the photosynthetic chain. The immediate electron acceptor for the enzyme in this species is believed to be plastoquinone. Couples the redox reaction to proton translocation, and thus conserves the redox energy in a proton gradient. Cyanobacterial NDH-1 also plays a role in inorganic carbon-concentration. The sequence is that of NAD(P)H-quinone oxidoreductase subunit N from Prochlorococcus marinus (strain MIT 9211).